Consider the following 431-residue polypeptide: Bifunctional protein GlmU (431 aa).

The interval 1 to 223 is pyrophosphorylase; that stretch reads MNLSIVILAA…EENFKGVNSK (223 aa). Residues 8–11, lysine 22, glutamine 74, and 81–82 contribute to the UDP-N-acetyl-alpha-D-glucosamine site; these read LAAG and GT. Aspartate 102 is a Mg(2+) binding site. The UDP-N-acetyl-alpha-D-glucosamine site is built by glycine 135, glutamate 149, asparagine 164, and asparagine 221. Position 221 (asparagine 221) interacts with Mg(2+). A linker region spans residues 224 to 244; the sequence is ADLAEAEAIMTGRIRRRWMRE. Residues 245 to 431 form an N-acetyltransferase region; it reads GVRMRLPETI…FFARYFSSSK (187 aa). Positions 308 and 325 each coordinate UDP-N-acetyl-alpha-D-glucosamine. The active-site Proton acceptor is histidine 336. Residues tyrosine 339 and asparagine 350 each contribute to the UDP-N-acetyl-alpha-D-glucosamine site. Residues alanine 353, 359 to 360, serine 378, alanine 396, and arginine 413 contribute to the acetyl-CoA site; that span reads NY.

The protein in the N-terminal section; belongs to the N-acetylglucosamine-1-phosphate uridyltransferase family. It in the C-terminal section; belongs to the transferase hexapeptide repeat family. Homotrimer. Requires Mg(2+) as cofactor.

Its subcellular location is the cytoplasm. The catalysed reaction is alpha-D-glucosamine 1-phosphate + acetyl-CoA = N-acetyl-alpha-D-glucosamine 1-phosphate + CoA + H(+). The enzyme catalyses N-acetyl-alpha-D-glucosamine 1-phosphate + UTP + H(+) = UDP-N-acetyl-alpha-D-glucosamine + diphosphate. Its pathway is nucleotide-sugar biosynthesis; UDP-N-acetyl-alpha-D-glucosamine biosynthesis; N-acetyl-alpha-D-glucosamine 1-phosphate from alpha-D-glucosamine 6-phosphate (route II): step 2/2. It functions in the pathway nucleotide-sugar biosynthesis; UDP-N-acetyl-alpha-D-glucosamine biosynthesis; UDP-N-acetyl-alpha-D-glucosamine from N-acetyl-alpha-D-glucosamine 1-phosphate: step 1/1. The protein operates within bacterial outer membrane biogenesis; LPS lipid A biosynthesis. Its function is as follows. Catalyzes the last two sequential reactions in the de novo biosynthetic pathway for UDP-N-acetylglucosamine (UDP-GlcNAc). The C-terminal domain catalyzes the transfer of acetyl group from acetyl coenzyme A to glucosamine-1-phosphate (GlcN-1-P) to produce N-acetylglucosamine-1-phosphate (GlcNAc-1-P), which is converted into UDP-GlcNAc by the transfer of uridine 5-monophosphate (from uridine 5-triphosphate), a reaction catalyzed by the N-terminal domain. The chain is Bifunctional protein GlmU from Wolinella succinogenes (strain ATCC 29543 / DSM 1740 / CCUG 13145 / JCM 31913 / LMG 7466 / NCTC 11488 / FDC 602W) (Vibrio succinogenes).